Consider the following 125-residue polypeptide: Holo-[acyl-carrier-protein] synthase (125 aa).

Residues D8 and E57 each contribute to the Mg(2+) site.

It belongs to the P-Pant transferase superfamily. AcpS family. Mg(2+) is required as a cofactor.

It localises to the cytoplasm. The enzyme catalyses apo-[ACP] + CoA = holo-[ACP] + adenosine 3',5'-bisphosphate + H(+). Transfers the 4'-phosphopantetheine moiety from coenzyme A to a Ser of acyl-carrier-protein. The sequence is that of Holo-[acyl-carrier-protein] synthase from Laribacter hongkongensis (strain HLHK9).